We begin with the raw amino-acid sequence, 269 residues long: MRVALKLAYIGTEFHGSQIQPNVETVEKELFKALRNLSIIESPKSADYTCAGRTDAGVHALGQVVAFDTEKPNLAIPRVINSELPPAIWAWAHAEVPYYFDARRSAVSRHYHYVMSGEDYDISKMREASKLLLGTHDFENFSRSNGEKSTVRTLERINVRVDGEITKIDVVGNSFLWNMVRKIVTALSMIGNGVRDNDWLLQMLNPEIYEEGIEPAPPYGLTLMGVNYGENIEWIEDDYSIRRAGEQNHKRILRHRVMAEVLEELISHE.

The active-site Nucleophile is the aspartate 55. Residue tyrosine 111 participates in substrate binding.

Belongs to the tRNA pseudouridine synthase TruA family.

It catalyses the reaction uridine(38/39/40) in tRNA = pseudouridine(38/39/40) in tRNA. In terms of biological role, formation of pseudouridine at positions 38, 39 and 40 in the anticodon stem and loop of transfer RNAs. This Methanosarcina acetivorans (strain ATCC 35395 / DSM 2834 / JCM 12185 / C2A) protein is tRNA pseudouridine synthase A.